A 139-amino-acid chain; its full sequence is Nuclear transcription factor Y subunit B-4 (139 aa).

A DNA-binding region spans residues 8–14 (LPIANVG). The subunit association domain (SAD) stretch occupies residues 35 to 46 (VQECATEFISFV). Over residues 90-115 (YREAERERTEHNKGSNDSGNEKETNT) the composition is skewed to basic and acidic residues. The tract at residues 90 to 139 (YREAERERTEHNKGSNDSGNEKETNTRSDVQNQSTKFIRVVEKGSSSSAR) is disordered. Over residues 116-125 (RSDVQNQSTK) the composition is skewed to polar residues.

Belongs to the NFYB/HAP3 subunit family. As to quaternary structure, heterotrimeric transcription factor composed of three components, NF-YA, NF-YB and NF-YC. NF-YB and NF-YC must interact and dimerize for NF-YA association and DNA binding. In terms of tissue distribution, expressed in flowers, siliques and young rosettes.

It is found in the nucleus. Its function is as follows. Component of the NF-Y/HAP transcription factor complex. The NF-Y complex stimulates the transcription of various genes by recognizing and binding to a CCAAT motif in promoters. In Arabidopsis thaliana (Mouse-ear cress), this protein is Nuclear transcription factor Y subunit B-4 (NFYB4).